Reading from the N-terminus, the 126-residue chain is Protein ApaG (126 aa).

Residues 2–126 (SDPRYQIDVS…FRLAVPGALH (125 aa)) enclose the ApaG domain.

The protein is Protein ApaG of Pseudomonas putida (strain W619).